Reading from the N-terminus, the 470-residue chain is Glutamate--tRNA ligase (470 aa).

The 'HIGH' region motif lies at 9–19 (PSPTGFLHVGG). Residues 236-240 (RLSKR) carry the 'KMSKS' region motif. ATP is bound at residue lysine 239.

Belongs to the class-I aminoacyl-tRNA synthetase family. Glutamate--tRNA ligase type 1 subfamily. As to quaternary structure, monomer.

It localises to the cytoplasm. It catalyses the reaction tRNA(Glu) + L-glutamate + ATP = L-glutamyl-tRNA(Glu) + AMP + diphosphate. Its function is as follows. Catalyzes the attachment of glutamate to tRNA(Glu) in a two-step reaction: glutamate is first activated by ATP to form Glu-AMP and then transferred to the acceptor end of tRNA(Glu). This Legionella pneumophila (strain Lens) protein is Glutamate--tRNA ligase.